A 172-amino-acid chain; its full sequence is Keratin-associated protein 13-1 (172 aa).

5 consecutive repeat copies span residues 46-55 (CQLGSSLYRG), 56-65 (CQQTCWEPTS), 66-75 (CQTSYVESSP), 76-85 (CQTSCYRPRT), and 92-101 (CQTTYSGSLG). Residues 46–101 (CQLGSSLYRGCQQTCWEPTSCQTSYVESSPCQTSCYRPRTSLLCSPCQTTYSGSLG) form a 5 X 10 AA approximate repeats region.

It belongs to the PMG family. Interacts with hair keratins. As to expression, weak expression seen in the late matrix and entire cortex area of the hair follicle.

Its function is as follows. In the hair cortex, hair keratin intermediate filaments are embedded in an interfilamentous matrix, consisting of hair keratin-associated proteins (KRTAP), which are essential for the formation of a rigid and resistant hair shaft through their extensive disulfide bond cross-linking with abundant cysteine residues of hair keratins. The matrix proteins include the high-sulfur and high-glycine-tyrosine keratins. The polypeptide is Keratin-associated protein 13-1 (KRTAP13-1) (Homo sapiens (Human)).